A 393-amino-acid polypeptide reads, in one-letter code: MGYYSLTEVTAVQYAKEHGYFEKKANVVCHEIGDGNLNYVFKLDDGEKSIIIKQALPYAKVVGESWPLSIKRATIESKALQIFAKYVPEYVPVVYSHDEELAVTVIEDLSRLTITRKGLIDGEEYPLLSQHIGRFLANVLFYTSDFGLQSEEKRVLEGTFVNPDLCKITEDLVFTDPFGHYDTNDYEPELQLTIDELWSDKTLKLKVAQYKYKFLTRKEALIHGDLHTGSIFSSPSETKVIDPEFATYGPFGFDIGQFIANLLLNALSREEEQRGVLFFHIEKTWSYFVETFTKLWIGEGVEAYTKEKQWLPIILQNIFTDAVGFAGCELIRRTIGLAHVADLDEITNKETRIQAKKQALSLGKELIKYESKNADIQLFRTLFQQTVSGGIKA.

ATP contacts are provided by residues N38, K53, and 107–109 (EDL). D225 contacts substrate. Position 242-244 (242-244 (DPE)) interacts with ATP. Residue R332 participates in substrate binding.

This sequence belongs to the methylthioribose kinase family. As to quaternary structure, homodimer.

The catalysed reaction is 5-(methylsulfanyl)-D-ribose + ATP = 5-(methylsulfanyl)-alpha-D-ribose 1-phosphate + ADP + H(+). It participates in amino-acid biosynthesis; L-methionine biosynthesis via salvage pathway; S-methyl-5-thio-alpha-D-ribose 1-phosphate from S-methyl-5'-thioadenosine (hydrolase route): step 2/2. Catalyzes the phosphorylation of methylthioribose into methylthioribose-1-phosphate. The chain is Methylthioribose kinase from Bacillus anthracis (strain A0248).